The sequence spans 394 residues: Zinc-regulated GTPase metalloprotein activator 1 (394 aa).

The psi-PxLVp motif signature appears at 16–23 (EDCPELVP). 48–55 (GYLGAGKT) serves as a coordination point for GTP. Cys106, Cys108, and Cys109 together coordinate Zn(2+). The CXCC motif signature appears at 106 to 109 (CLCC). GTP is bound by residues 109–113 (CSVKD) and 202–205 (NKTD). The CobW C-terminal domain maps to 272-375 (IVTVTFDVPG…ILQQLFITAV (104 aa)).

It belongs to the SIMIBI class G3E GTPase family. ZNG1 subfamily.

Its subcellular location is the nucleus. The enzyme catalyses GTP + H2O = GDP + phosphate + H(+). Functionally, zinc chaperone that directly transfers zinc cofactor to target metalloproteins, thereby activating them. Catalyzes zinc insertion into the active site of methionine aminopeptidase METAP1, which function to cleave the initiator methionine from polypeptides during or after protein translation. Mechanistically, the N-terminal psi-PxLVp motif binds to the C6H2-type zinc finger of inactive form of METAP1. After formation of the docked complex, zinc is transferred from the CXCC motif in the GTPase domain of ZNG1 to the zinc binding site in the peptidase domain of METAP1 in a process requiring GTP hydrolysis. GTP/GDP exchange is required for release of active METAP1. This chain is Zinc-regulated GTPase metalloprotein activator 1 (Zng1), found in Rattus norvegicus (Rat).